Reading from the N-terminus, the 249-residue chain is Indole-3-glycerol phosphate synthase (249 aa).

It belongs to the TrpC family.

It catalyses the reaction 1-(2-carboxyphenylamino)-1-deoxy-D-ribulose 5-phosphate + H(+) = (1S,2R)-1-C-(indol-3-yl)glycerol 3-phosphate + CO2 + H2O. Its pathway is amino-acid biosynthesis; L-tryptophan biosynthesis; L-tryptophan from chorismate: step 4/5. The polypeptide is Indole-3-glycerol phosphate synthase (Pyrobaculum aerophilum (strain ATCC 51768 / DSM 7523 / JCM 9630 / CIP 104966 / NBRC 100827 / IM2)).